A 310-amino-acid chain; its full sequence is Homoserine kinase (310 aa).

91 to 101 contacts ATP; it reads PIGSGLGSSAC.

Belongs to the GHMP kinase family. Homoserine kinase subfamily.

It localises to the cytoplasm. It carries out the reaction L-homoserine + ATP = O-phospho-L-homoserine + ADP + H(+). Its pathway is amino-acid biosynthesis; L-threonine biosynthesis; L-threonine from L-aspartate: step 4/5. Its function is as follows. Catalyzes the ATP-dependent phosphorylation of L-homoserine to L-homoserine phosphate. The chain is Homoserine kinase from Escherichia coli (strain SMS-3-5 / SECEC).